Here is a 74-residue protein sequence, read N- to C-terminus: Protein kish-B (74 aa).

A signal peptide spans 1–22; the sequence is MTNVYSLDGILVFGLLFVCTCA. Topologically, residues 23 to 52 are extracellular; it reads YFKKVPRLKTWLLSEKKGVWGVFYKAAVIG. The chain crosses the membrane as a helical span at residues 53-73; that stretch reads TRLHAAVAIACVVMAFYVLFI. Position 74 (Lys74) is a topological domain, cytoplasmic.

The protein belongs to the KISH family.

Its subcellular location is the golgi apparatus membrane. In terms of biological role, involved in the early part of the secretory pathway. The sequence is that of Protein kish-B (TMEM167B) from Homo sapiens (Human).